The primary structure comprises 344 residues: MMVIRPVERSDVSALMQLASKTGGGLTSLPANEATLSARIERAIKTWQGELPKSEQGYVFVLEDSETGTVAGICAIEVAVGLNDPWYNYRVGTLVHASKELNVYNALPTLFLSNDHTGSSELCTLFLDPEWRKEGNGYLLSKSRFMFMAAFRDKFNDKVVAEMRGVIDEHGYSPFWQSLGKRFFSMDFSRADFLCGTGQKAFIAELMPKHPIYTHFLSQEAQDVIGQVHPQTAPARAVLEKEGFRYRNYIDIFDGGPTLECDIDRVRAIRKSRLVEVAEGQPAQGDFPACLVANENYHHFRVVLVRTDPATERLILTAAQLDALKCHAGDRVRLVRLCAEEKTA.

Leu-125 serves as a coordination point for succinyl-CoA. His-229 functions as the Proton donor in the catalytic mechanism.

It belongs to the arginine N-succinyltransferase family.

It carries out the reaction succinyl-CoA + L-arginine = N(2)-succinyl-L-arginine + CoA + H(+). The protein operates within amino-acid degradation; L-arginine degradation via AST pathway; L-glutamate and succinate from L-arginine: step 1/5. Functionally, catalyzes the transfer of succinyl-CoA to arginine to produce N(2)-succinylarginine. The chain is Arginine N-succinyltransferase from Escherichia coli O17:K52:H18 (strain UMN026 / ExPEC).